The following is a 321-amino-acid chain: Coproporphyrin III ferrochelatase (321 aa).

Fe(2+) is bound by residues histidine 185 and glutamate 267.

This sequence belongs to the ferrochelatase family.

Its subcellular location is the cytoplasm. It catalyses the reaction Fe-coproporphyrin III + 2 H(+) = coproporphyrin III + Fe(2+). It functions in the pathway porphyrin-containing compound metabolism; protoheme biosynthesis. In terms of biological role, involved in coproporphyrin-dependent heme b biosynthesis. Catalyzes the insertion of ferrous iron into coproporphyrin III to form Fe-coproporphyrin III. In Lacticaseibacillus casei (strain BL23) (Lactobacillus casei), this protein is Coproporphyrin III ferrochelatase.